A 130-amino-acid polypeptide reads, in one-letter code: Small ribosomal subunit protein uS8 (130 aa).

This sequence belongs to the universal ribosomal protein uS8 family. As to quaternary structure, part of the 30S ribosomal subunit. Contacts proteins S5 and S12.

In terms of biological role, one of the primary rRNA binding proteins, it binds directly to 16S rRNA central domain where it helps coordinate assembly of the platform of the 30S subunit. In Coxiella burnetii (strain RSA 331 / Henzerling II), this protein is Small ribosomal subunit protein uS8.